We begin with the raw amino-acid sequence, 295 residues long: Mediator of RNA polymerase II transcription subunit 27 (295 aa).

This sequence belongs to the Mediator complex subunit 27 family. In terms of assembly, component of the Mediator complex.

It is found in the nucleus. In terms of biological role, component of the Mediator complex, a coactivator involved in the regulated transcription of nearly all RNA polymerase II-dependent genes. Mediator functions as a bridge to convey information from gene-specific regulatory proteins to the basal RNA polymerase II transcription machinery. Mediator is recruited to promoters by direct interactions with regulatory proteins and serves as a scaffold for the assembly of a functional preinitiation complex with RNA polymerase II and the general transcription factors. This is Mediator of RNA polymerase II transcription subunit 27 (MED27) from Aedes aegypti (Yellowfever mosquito).